The primary structure comprises 452 residues: Probable ECA polymerase (452 aa).

11 consecutive transmembrane segments (helical) span residues 6–26, 37–57, 63–83, 118–138, 155–175, 181–201, 207–227, 228–248, 341–361, 378–398, and 410–430; these read FSGLLVVWLLSTLFIATLTWF, VFFSLLFLLTFFFGFPLTSVL, VGVAPPEILLQALLSAACFYG, VILMGIALVSVAIFFMHNGFL, GVALKRFFYFFIPAMLVVYFL, AWLFFLVSTVAFGLLTYMIVG, IIIAFAIFLFIGIIRGWISLW, MLAAAGVLGIVGMFWLALKRY, LVVMGGALFIPLGAIVVGLII, YKAAILHSFCFGAIFNMIVLV, and VFFLVVFGASLLVAKLLFWLF.

This sequence belongs to the WzyE family. As to quaternary structure, probably part of a complex composed of WzxE, WzyE and WzzE.

Its subcellular location is the cell inner membrane. The protein operates within bacterial outer membrane biogenesis; enterobacterial common antigen biosynthesis. Functionally, probably involved in the polymerization of enterobacterial common antigen (ECA) trisaccharide repeat units. The protein is Probable ECA polymerase of Salmonella gallinarum (strain 287/91 / NCTC 13346).